The primary structure comprises 493 residues: Exosome complex component Rrp41 (493 aa).

2 disordered regions span residues valine 244 to valine 264 and leucine 291 to glutamate 493. Over residues alanine 249–leucine 259 the composition is skewed to basic and acidic residues. The segment covering proline 297 to alanine 377 has biased composition (acidic residues). Residues proline 383 to alanine 400 are compositionally biased toward basic and acidic residues. Acidic residues predominate over residues serine 401 to lysine 471. Positions serine 472 to glutamate 493 are enriched in basic and acidic residues.

The protein belongs to the RNase PH family. Rrp41 subfamily. As to quaternary structure, component of the archaeal exosome complex. Forms a hexameric ring-like arrangement composed of 3 Rrp41-Rrp42 heterodimers. The hexameric ring associates with a trimer of Rrp4 and/or Csl4 subunits.

Its subcellular location is the cytoplasm. In terms of biological role, catalytic component of the exosome, which is a complex involved in RNA degradation. Has 3'-&gt;5' exoribonuclease activity. Can also synthesize heteromeric RNA-tails. The chain is Exosome complex component Rrp41 from Methanosarcina mazei (strain ATCC BAA-159 / DSM 3647 / Goe1 / Go1 / JCM 11833 / OCM 88) (Methanosarcina frisia).